A 286-amino-acid chain; its full sequence is 4-hydroxybenzoate octaprenyltransferase (286 aa).

A run of 7 helical transmembrane segments spans residues I20 to M40, P43 to I63, L83 to C103, F135 to F155, G160 to Y180, V209 to L229, and I234 to I254.

Belongs to the UbiA prenyltransferase family. Mg(2+) is required as a cofactor.

Its subcellular location is the cell inner membrane. The enzyme catalyses all-trans-octaprenyl diphosphate + 4-hydroxybenzoate = 4-hydroxy-3-(all-trans-octaprenyl)benzoate + diphosphate. The protein operates within cofactor biosynthesis; ubiquinone biosynthesis. Catalyzes the prenylation of para-hydroxybenzoate (PHB) with an all-trans polyprenyl group. Mediates the second step in the final reaction sequence of ubiquinone-8 (UQ-8) biosynthesis, which is the condensation of the polyisoprenoid side chain with PHB, generating the first membrane-bound Q intermediate 3-octaprenyl-4-hydroxybenzoate. The sequence is that of 4-hydroxybenzoate octaprenyltransferase from Nitrosomonas eutropha (strain DSM 101675 / C91 / Nm57).